Consider the following 1435-residue polypeptide: MTEQQKFKVLADQIKISNQLDAEILNSGELTRIDVSNKNRTWEFHITLPQFLAHEDYLLFINAIEQEFKDIANVTCRFTVTNGTNQDEHAIKYFGHCIDQTALSPKVKGQLKQKKLIMSGKVLKVMVSNDIERNHFDKACNGSLIKAFRNCGFDIDKIIFETNDNDQEQNLASLEAHIQEEDEQSARLATEKLEKMKAEKAKQQDNKQSAVDKCQIGKPIQIENIKPIESIIEEEFKVAIEGVIFDINLKELKSGRHIVEIKVTDYTDSLVLKMFTRKNKDDLEHFKALSVGKWVRAQGRIEEDTFIRDLVMMMSDIEEIKKATKKDKAEEKRVEFHLHTAMSQMDGIPNIGAYVKQAADWGHPAIAVTDHNVVQAFPDAHAAAEKHGIKMIYGMEGMLVDDGVPIAYKPQDVVLKDATYVVFDVETTGLSNQYDKIIELAAVKVHNGEIIDKFERFSNPHERLSETIINLTHITDDMLVDAPEIEEVLTEFKEWVGDAIFVAHNASFDMGFIDTGYERLGFGPSTNGVIDTLELSRTINTEYGKHGLNFLAKKYGVELTQHHRAIYDTEATAYIFIKMVQQMKELGVLNHNEINKKLSNEDAYKRARPSHVTLIVQNQQGLKNLFKIVSASLVKYFYRTPRIPRSLLDEYREGLLVGTACDEGELFTAVMQKDQSQVEKIAKYYDFIEIQPPALYQDLIDRELIRDTETLHEIYQRLIHAGDTAGIPVIATGNAHYLFEHDGIARKILIASQPGNPLNRSTLPEAHFRTTDEMLNEFHFLGEEKAHEIVVKNTNELADRIERVVPIKDELYTPRMEGANEEIRELSYANARKLYGEDLPQIVIDRLEKELKSIIGNGFAVIYLISQRLVKKSLDDGYLVGSRGSVGSSFVATMTEITEVNPLPPHYICPNCKTSEFFNDGSVGSGFDLPDKTCETCGAPLIKEGQDIPFEKFLGFKGDKVPDIDLNFSGEYQPNAHNYTKVLFGEDKVFRAGTIGTVAEKTAFGYVKGYLNDQGIHKRGAEIDRLVKGCTGVKATTGQHPGGIIVVPDYMDIYDFTPIQYPADDQNSAWMTTHFDFHSIHDNVLKLDILGHDDPTMIRMLQDLSGIDPKTIPVDDKEVMQIFSTPESLGVTEDEILCKTGTFGVPNSDRIRRQMLEDTKPTTFSELVQISGLSHGTDVWLGNAQELIKTGICDLSSVIGCRDDIMVYLMYAGLEPSMAFKIMESVRKGKGLTEEMIETMKENEVPDWYLDSCLKIKYIFPKAHAAAYVLMAVRIAYFKVHHPLYYYASYFTIRASDFDLITMIKDKTSIRNTVKDMYSRYMDLGKKEKDVLTVLEIMNEMAHRGYRMQPISLEKSQAFEFIIEGDTLIPPFISVPGLGENVAKRIVEARDDGPFLSKEDLNKKAGLYQKIIEYLDELGSLPNLPDKAQLSIFDM.

The Exonuclease domain maps to 420-576; that stretch reads YVVFDVETTG…YDTEATAYIF (157 aa).

Belongs to the DNA polymerase type-C family. PolC subfamily.

Its subcellular location is the cytoplasm. It carries out the reaction DNA(n) + a 2'-deoxyribonucleoside 5'-triphosphate = DNA(n+1) + diphosphate. Functionally, required for replicative DNA synthesis. This DNA polymerase also exhibits 3' to 5' exonuclease activity. The protein is DNA polymerase III PolC-type of Staphylococcus aureus.